A 280-amino-acid polypeptide reads, in one-letter code: Chaperone protein DnaJ 2 (280 aa).

One can recognise a J domain in the interval Asp6 to Gly70.

The protein belongs to the DnaJ family. In terms of assembly, forms a heterononamer with DnaJ and DafA in the resting state. Three copies of each protein are present in the complex.

It localises to the cytoplasm. Functionally, does not influence ATP binding or hydrolysis nor ADP release. Exerts influence on the interaction of DnaK with substrates; in the presence of DafA, DnaJ inhibits substrate binding, and substrate already bound to DnaK is displaced by DnaJ and DafA. In Thermus thermophilus (strain ATCC 27634 / DSM 579 / HB8), this protein is Chaperone protein DnaJ 2 (dnaJ2).